Reading from the N-terminus, the 318-residue chain is 2-keto-3-deoxygluconate permease (318 aa).

10 helical membrane passes run 10–30, 42–62, 82–102, 109–129, 139–159, 163–183, 201–221, 224–244, 257–277, and 289–309; these read LPGG…TLWP, GLIS…GATI, IAVA…GGVS, LSVL…YAAL, AGAV…LILG, LASF…LGFA, TLVP…TIAH, TSGV…LLLA, VAAS…AGMA, and ALVA…TALY.

It belongs to the KdgT transporter family.

The protein resides in the cell inner membrane. It catalyses the reaction 2-dehydro-3-deoxy-D-gluconate(in) + H(+)(in) = 2-dehydro-3-deoxy-D-gluconate(out) + H(+)(out). Catalyzes the proton-dependent uptake of 2-keto-3-deoxygluconate (KDG) into the cell. This is 2-keto-3-deoxygluconate permease from Xanthomonas axonopodis pv. citri (strain 306).